We begin with the raw amino-acid sequence, 215 residues long: Ribonuclease T (215 aa).

One can recognise an Exonuclease domain in the interval 20-194 (VVIDVETAGF…YDTEQTAQLF (175 aa)). Positions 23, 25, 181, and 186 each coordinate Mg(2+). The Proton donor/acceptor role is filled by H181.

Belongs to the RNase T family. Homodimer. Mg(2+) serves as cofactor.

Its function is as follows. Trims short 3' overhangs of a variety of RNA species, leaving a one or two nucleotide 3' overhang. Responsible for the end-turnover of tRNA: specifically removes the terminal AMP residue from uncharged tRNA (tRNA-C-C-A). Also appears to be involved in tRNA biosynthesis. This Klebsiella pneumoniae subsp. pneumoniae (strain ATCC 700721 / MGH 78578) protein is Ribonuclease T.